A 291-amino-acid chain; its full sequence is Kidney mitochondrial carrier protein 1 (291 aa).

Ser-2 is modified (N-acetylserine). Solcar repeat units follow at residues Lys-7–Leu-96, Glu-104–His-189, and Asp-198–Leu-289. 6 consecutive transmembrane segments (helical) span residues Phe-9–Ile-26, Gly-71–Thr-89, Leu-106–Ala-124, Gly-164–Tyr-183, Phe-204–Val-224, and Gly-264–Tyr-283.

This sequence belongs to the mitochondrial carrier (TC 2.A.29) family. As to quaternary structure, interacts with VDAC1.

It localises to the mitochondrion inner membrane. The enzyme catalyses sulfite(in) + sulfate(out) = sulfite(out) + sulfate(in). It catalyses the reaction thiosulfate(in) + sulfate(out) = thiosulfate(out) + sulfate(in). It carries out the reaction sulfate(out) + phosphate(in) = sulfate(in) + phosphate(out). The catalysed reaction is oxalate(in) + sulfate(out) = oxalate(out) + sulfate(in). The enzyme catalyses malonate(in) + sulfate(out) = malonate(out) + sulfate(in). It catalyses the reaction maleate(in) + sulfate(out) = maleate(out) + sulfate(in). It carries out the reaction (S)-malate(in) + sulfate(out) = (S)-malate(out) + sulfate(in). The catalysed reaction is (3S)-citramalate(in) + sulfate(out) = (3S)-citramalate(out) + sulfate(in). The enzyme catalyses (3R)-citramalate(in) + sulfate(out) = (3R)-citramalate(out) + sulfate(in). It catalyses the reaction sulfate(out) + succinate(in) = sulfate(in) + succinate(out). It carries out the reaction (S,S)-tartrate(in) + sulfate(out) = (S,S)-tartrate(out) + sulfate(in). The catalysed reaction is (2R,3R)-tartrate(in) + sulfate(out) = (2R,3R)-tartrate(out) + sulfate(in). The enzyme catalyses D-aspartate(in) + sulfate(out) = D-aspartate(out) + sulfate(in). It catalyses the reaction L-aspartate(in) + sulfate(out) = L-aspartate(out) + sulfate(in). It carries out the reaction sulfate(in) = sulfate(out). The catalysed reaction is phosphate(in) = phosphate(out). The enzyme catalyses (S)-malate(out) = (S)-malate(in). In terms of biological role, antiporter that transports inorganic anions (sulfate, sulfite, thiosulfate and phosphate) and, to a lesser extent, a variety of dicarboxylates (e.g. malonate, malate and citramalate) and, even more so, aspartate. The sulfate/sulfate exchange is much higher than the phosphate/phosphate and malate/malate exchanges. The transport affinities is higher for sulfate and thiosulfate than for any other substrate. May catalyze the export of sulfite and thiosulfate (the hydrogen sulfide degradation products) from the mitochondria, thereby modulating the level of the hydrogen sulfide. Also may mediate a very low unidirectional transport of sulfate, phosphate and (S)-malate. The protein is Kidney mitochondrial carrier protein 1 of Rattus norvegicus (Rat).